Reading from the N-terminus, the 469-residue chain is RuvB-like helicase 2 (469 aa).

73–80 (GEPGTGKT) provides a ligand contact to ATP.

It belongs to the RuvB family. In terms of assembly, forms homohexameric rings. May form a dodecamer with rvb1 made of two stacked hexameric rings. Component of the chromatin remodeling Ino80 complex. Component of the RNA polymerase II holoenzyme complex.

Its subcellular location is the nucleus. The catalysed reaction is ATP + H2O = ADP + phosphate + H(+). In terms of biological role, has double-stranded DNA-stimulated ATPase and ATP-dependent DNA helicase (5' to 3') activity suggesting a role in nuclear processes such as recombination and transcription. Proposed core component of the chromatin remodeling Ino80 complex which is involved in transcriptional regulation, DNA replication and probably DNA repair. This chain is RuvB-like helicase 2 (rvb2), found in Dictyostelium discoideum (Social amoeba).